The primary structure comprises 233 residues: Antiholin-like protein LrgB (233 aa).

Transmembrane regions (helical) follow at residues 9 to 29 (TPYF…ILFE), 34 to 54 (FFLF…LYLT), 63 to 83 (IGGD…AIPL), 97 to 117 (IIGG…TFAK), 121 to 141 (FAND…IALP), 144 to 164 (AGIG…GVII), and 212 to 232 (IALV…VAIF).

Belongs to the CidB/LrgB family. LrgB subfamily.

It localises to the cell membrane. Inhibits the expression or activity of extracellular murein hydrolases by interacting, possibly with LrgA, with the holin-like proteins CidA and/or CidB. The LrgAB and CidAB proteins may affect the proton motive force of the membrane. May be involved in programmed cell death (PCD), possibly triggering PCD in response to antibiotics and environmental stresses. This chain is Antiholin-like protein LrgB, found in Staphylococcus aureus (strain Mu3 / ATCC 700698).